Reading from the N-terminus, the 431-residue chain is Glutamate-1-semialdehyde 2,1-aminomutase (431 aa).

Lysine 267 is modified (N6-(pyridoxal phosphate)lysine).

It belongs to the class-III pyridoxal-phosphate-dependent aminotransferase family. HemL subfamily. As to quaternary structure, homodimer. It depends on pyridoxal 5'-phosphate as a cofactor.

It localises to the cytoplasm. It catalyses the reaction (S)-4-amino-5-oxopentanoate = 5-aminolevulinate. The protein operates within porphyrin-containing compound metabolism; protoporphyrin-IX biosynthesis; 5-aminolevulinate from L-glutamyl-tRNA(Glu): step 2/2. This chain is Glutamate-1-semialdehyde 2,1-aminomutase, found in Syntrophomonas wolfei subsp. wolfei (strain DSM 2245B / Goettingen).